The primary structure comprises 1028 residues: Unconventional myosin-Ic-A (1028 aa).

Position 1 is an N-acetylmethionine (Met1). The 685-residue stretch at 12-696 (GVQDFVLLEN…TLFATEDALE (685 aa)) folds into the Myosin motor domain. ATP is bound at residue 105 to 112 (GESGSGKT). Lys348 bears the N6-methyllysine mark. Positions 573–595 (LSKLMEILMSKEPSYVRCIKPND) are actin-binding. IQ domains lie at 699-728 (KQGIATFLQARWKGYVQRRNFLHMKHSAIN) and 722-751 (MKHSAINIQSWWRGNIGRKKAAKKRWAVDV). The region spanning 850–1024 (KDNYPQSVPR…NGHLSVVAPR (175 aa)) is the TH1 domain.

This sequence belongs to the TRAFAC class myosin-kinesin ATPase superfamily. Myosin family. Interacts (via its IQ motifs) with calmodulin.

The protein resides in the cytoplasm. It is found in the cell membrane. Its subcellular location is the cell projection. The protein localises to the stereocilium membrane. Myosins are actin-based motor molecules with ATPase activity. Unconventional myosins serve in intracellular movements. Their highly divergent tails are presumed to bind to membranous compartments, which would be moved relative to actin filaments. Involved in egg activation by coupling dynamic actin to membrane. The protein is Unconventional myosin-Ic-A (myo1c-a) of Xenopus laevis (African clawed frog).